Reading from the N-terminus, the 524-residue chain is Protein-export membrane protein SecD (524 aa).

The next 6 membrane-spanning stretches (helical) occupy residues 10–30, 366–386, 389–409, 420–442, 465–485, and 487–507; these read VIFLVAAILLSTFALFSPTMG, KFDSLITGIVAVLAVAGVVFI, GKPQVALPMIVTGLSEVYILL, DLSVIAGFIAVIGTGVDDLIIIA, FWVIGAAAATTIIAMSPLAVL, and LGDLQGFAIFTILGVIVGVLV.

It belongs to the SecD/SecF family. SecD subfamily. As to quaternary structure, part of the protein translocation apparatus. Forms a homodimer and complexes with SecF.

It localises to the cell membrane. In terms of biological role, involved in protein export. This chain is Protein-export membrane protein SecD, found in Haloferax volcanii (strain ATCC 29605 / DSM 3757 / JCM 8879 / NBRC 14742 / NCIMB 2012 / VKM B-1768 / DS2) (Halobacterium volcanii).